The chain runs to 278 residues: MATHVKTPDQLQESGTGLVHSLAKGLEILSCFSEGELLGNQQLVELTGLPKATVSRLTSTLVKLGYLQVDPRSRKLAMGARVLGLGVSVQRKLGLQRIARPHMEALSQRFGLTVTMGTRDRLSVVLLEVCRPPSLAQLVVNFDAGTHMPLSQTALGLASLVNSPVKDREQVIEGLRKQLGDQWVEARNRIERAHQEHERYGYIVSQRSLGRDVSGVAVGMVPMGSNTPYVFHMAGPSNQMPLSLMRSDMGPALKQMVQDIQAEMRAARPPKLVVPKEF.

The HTH iclR-type domain occupies 19–80 (VHSLAKGLEI…PRSRKLAMGA (62 aa)). Positions 40-59 (NQQLVELTGLPKATVSRLTS) form a DNA-binding region, H-T-H motif. Residues 95–266 (LQRIARPHME…VQDIQAEMRA (172 aa)) enclose the IclR-ED domain.

In terms of biological role, both copies function as additional regulators for the tsa locus, specifically for tsaT. The sequence is that of HTH-type transcriptional regulator TsaQ1/TsaQ2 (tsaQ1) from Comamonas testosteroni (Pseudomonas testosteroni).